The chain runs to 221 residues: Ribosomal RNA small subunit methyltransferase G (221 aa).

S-adenosyl-L-methionine is bound by residues Gly90, Leu95, 141–142 (VE), and Arg154.

Belongs to the methyltransferase superfamily. RNA methyltransferase RsmG family.

It is found in the cytoplasm. The catalysed reaction is guanosine(527) in 16S rRNA + S-adenosyl-L-methionine = N(7)-methylguanosine(527) in 16S rRNA + S-adenosyl-L-homocysteine. Functionally, specifically methylates the N7 position of guanine in position 527 of 16S rRNA. This chain is Ribosomal RNA small subunit methyltransferase G, found in Polaromonas naphthalenivorans (strain CJ2).